Reading from the N-terminus, the 376-residue chain is Heat-inducible transcription repressor HrcA (376 aa).

Belongs to the HrcA family.

Negative regulator of class I heat shock genes (grpE-dnaK-dnaJ and groELS operons). Prevents heat-shock induction of these operons. In Chloroflexus aggregans (strain MD-66 / DSM 9485), this protein is Heat-inducible transcription repressor HrcA.